Here is a 386-residue protein sequence, read N- to C-terminus: Palmitoyltransferase ZDHHC18 (386 aa).

Residues 1–65 (MKDCEYQQIS…GSGSLGRRPR (65 aa)) are disordered. Over 1 to 88 (MKDCEYQQIS…CGGRLMLAGH (88 aa)) the chain is Cytoplasmic. Ser19 is modified (phosphoserine). Over residues 27-40 (PAAPPGPSPGPAPG) the composition is skewed to pro residues. Gly residues predominate over residues 49 to 59 (SGSGSGSGSGS). Residues 89–109 (GGVFALTLLLILSTTILFFIF) form a helical membrane-spanning segment. Residues 110–117 (DCPYLART) lie on the Lumenal side of the membrane. Residues 118–138 (LTLAIPIIAAILFFFVMSCLL) form a helical membrane-spanning segment. The Cytoplasmic segment spans residues 139 to 233 (QTSFTDPGIL…GNCVGRRNYR (95 aa)). In terms of domain architecture, DHHC spans 190-240 (KYCFTCKMFRPPRTSHCSVCDNCVERFDHHCPWVGNCVGRRNYRFFYAFIL). The S-palmitoyl cysteine intermediate role is filled by Cys220. A helical membrane pass occupies residues 234–254 (FFYAFILSLSFLTAFIFACVV). At 255–275 (THLTLLSQGSNFLSALNKTPA) the chain is on the lumenal side. Residues 276 to 296 (GVLELVICFFSIWSILGLSGF) form a helical membrane-spanning segment. Residues 297 to 386 (HTYLVASNLT…PDASMVGGHP (90 aa)) lie on the Cytoplasmic side of the membrane. The tract at residues 362–386 (LPSPIRSDEPACGAKPDASMVGGHP) is disordered.

It belongs to the DHHC palmitoyltransferase family. ERF2/ZDHHC9 subfamily.

The protein localises to the golgi apparatus membrane. The enzyme catalyses L-cysteinyl-[protein] + hexadecanoyl-CoA = S-hexadecanoyl-L-cysteinyl-[protein] + CoA. Palmitoyltransferase that catalyzes the addition of palmitate onto various protein substrates, such as CGAS, HRAS and LCK. Acts as a negative regulator of the cGAS-STING pathway be mediating palmitoylation and inactivation of CGAS. May also have a palmitoyltransferase activity toward the beta-2 adrenergic receptor/ADRB2 and therefore regulate G protein-coupled receptor signaling. This Rattus norvegicus (Rat) protein is Palmitoyltransferase ZDHHC18.